A 499-amino-acid chain; its full sequence is Cytochrome P450 81Q32 (499 aa).

A helical transmembrane segment spans residues Thr-5–Val-25. Residues Asn-112, Asn-183, and Asn-266 are each glycosylated (N-linked (GlcNAc...) asparagine). Cys-434 is a binding site for heme.

This sequence belongs to the cytochrome P450 family. In terms of tissue distribution, expressed in leaf epidermis and in the leaf internal phloem-associated parenchyma (IPAP) inside the mesophyll.

It localises to the membrane. In Catharanthus roseus (Madagascar periwinkle), this protein is Cytochrome P450 81Q32.